The sequence spans 364 residues: MITAEKKKRNKFLPNFEKQSIYSLRYDEMQQWLIDHGQQKFRAKQIFEWLYQKRVNTIDEMTNLSKELRQILKDHFAMTTLTTVVKQESKDGTIKFLFELQDGYTIETVLMRHEYGNSVCVTTQVGCRIGCTFCASTLGGLKRNLEAGEIVSQVLTVQKALDETNERVSQIVIMGIGEPFENYDEMMDFLRIVNDDNSLNIGARHITVSTSGIIPRIYDFAEEDIQINFAVSLHGAKDEIRSRLMPINRAYNVDKLMEAIRYYQEKTNRRVTFEYGLFGGVNDQLEHARDLAHLIKNLNCHVNLIPVNHVPERNYVKTPKDDIFKFEKELKRLGINATIRREQGSDIDAACGQLRAKERQVETR.

The active-site Proton acceptor is glutamate 107. In terms of domain architecture, Radical SAM core spans 113-346; sequence HEYGNSVCVT…ATIRREQGSD (234 aa). Cysteine 120 and cysteine 351 are disulfide-bonded. [4Fe-4S] cluster-binding residues include cysteine 127, cysteine 131, and cysteine 134. S-adenosyl-L-methionine-binding positions include 177-178, serine 209, 232-234, and asparagine 308; these read GE and SLH. Cysteine 351 functions as the S-methylcysteine intermediate in the catalytic mechanism.

This sequence belongs to the radical SAM superfamily. RlmN family. Requires [4Fe-4S] cluster as cofactor.

The protein resides in the cytoplasm. It carries out the reaction adenosine(2503) in 23S rRNA + 2 reduced [2Fe-2S]-[ferredoxin] + 2 S-adenosyl-L-methionine = 2-methyladenosine(2503) in 23S rRNA + 5'-deoxyadenosine + L-methionine + 2 oxidized [2Fe-2S]-[ferredoxin] + S-adenosyl-L-homocysteine. The enzyme catalyses adenosine(37) in tRNA + 2 reduced [2Fe-2S]-[ferredoxin] + 2 S-adenosyl-L-methionine = 2-methyladenosine(37) in tRNA + 5'-deoxyadenosine + L-methionine + 2 oxidized [2Fe-2S]-[ferredoxin] + S-adenosyl-L-homocysteine. Functionally, specifically methylates position 2 of adenine 2503 in 23S rRNA and position 2 of adenine 37 in tRNAs. Confers resistance to some classes of antibiotics. The sequence is that of Probable dual-specificity RNA methyltransferase RlmN from Staphylococcus epidermidis (strain ATCC 12228 / FDA PCI 1200).